The primary structure comprises 157 residues: Baculoviral IAP repeat-containing protein 5.2-A (157 aa).

Residues 31-101 (RLRTFSNWPF…KHSPSCLFIA (71 aa)) form a BIR repeat. Position 47 is a phosphothreonine; by CDK1 (Thr-47). The Zn(2+) site is built by Cys-70, Cys-73, His-90, and Cys-97.

The protein belongs to the IAP family. In terms of assembly, component of the CPC at least composed of survivin/birc5, incenp, cdca8/borealin and/or cdca9/dasra-A, and aurkb/aurora-B. Interacts directly with incenp (via N-terminus). Interacts with rxra; the interaction is stronger in the absence of 9-cis retinoic acids. Post-translationally, ubiquitination is required for centrosome-targeting. As to expression, highly expressed in vascular endothelial cells of tadpoles.

It is found in the cytoplasm. The protein localises to the nucleus. The protein resides in the chromosome. It localises to the centromere. Its subcellular location is the cytoskeleton. It is found in the spindle. Functionally, component of the chromosomal passenger complex (CPC), a complex that acts as a key regulator of mitosis. The CPC complex has essential functions at the centromere in ensuring correct chromosome alignment and segregation and is required for chromatin-induced microtubule stabilization and spindle assembly. Does not appear to exhibit anti-apoptotic activity. Plays a role in increasing blood vessel size during development. This chain is Baculoviral IAP repeat-containing protein 5.2-A (birc5.2-a), found in Xenopus laevis (African clawed frog).